Consider the following 453-residue polypeptide: UDP-N-acetylmuramoylalanine--D-glutamate ligase (453 aa).

119 to 125 (GSNGKTT) contributes to the ATP binding site.

This sequence belongs to the MurCDEF family.

It is found in the cytoplasm. The enzyme catalyses UDP-N-acetyl-alpha-D-muramoyl-L-alanine + D-glutamate + ATP = UDP-N-acetyl-alpha-D-muramoyl-L-alanyl-D-glutamate + ADP + phosphate + H(+). It participates in cell wall biogenesis; peptidoglycan biosynthesis. Its function is as follows. Cell wall formation. Catalyzes the addition of glutamate to the nucleotide precursor UDP-N-acetylmuramoyl-L-alanine (UMA). The chain is UDP-N-acetylmuramoylalanine--D-glutamate ligase from Streptococcus uberis (strain ATCC BAA-854 / 0140J).